Reading from the N-terminus, the 296-residue chain is Polyadenylate-binding protein 2-A (296 aa).

Residues 1-106 (MAAVSSVASL…GELTGDQTIE (106 aa)) are disordered. The span at 71–82 (GRGGSGGGGAGG) shows a compositional bias: gly residues. Positions 84–97 (EELEDEELEEEEPG) are enriched in acidic residues. Residues 107-141 (DPELEAIKARVREMEEEAEKLKELQNEVEKQMNMS) are a coiled coil. The interval 146–296 (NAGPVIMSVE…ARATSWYTPY (151 aa)) is necessary for homooligomerization. An RRM domain is found at 163-240 (RSIYVGNVDY…RQIKVVPKRT (78 aa)).

In terms of assembly, monomer and homooligomer. Binds RNA as a monomer and oligomerizes when bound to poly(A). Shows dynamic spatial expression throughout development. First expressed in the animal pole region of the egg and this pattern persists through to the blastula stage. In gastrula and neurula embryos, expressed mainly in ectodermal, neural and epidermal regions. Neural tissue-specific expression pattern persists into tailbud stage when expression is localized to the brain and spinal cord. At early tadpole stage, expression becomes gradually confined to the specific vesicle regions of the developing brain. At stage 39, expressed in the telencephalon and mesencephalon regions of the brain. Also detected in the eye and olfactory pit at the tadpole stage. Expressed during gut endoderm development. At stage 35, expressed exclusively in the anterior portion of the gut endoderm, which includes the prospective liver, stomach and pancreas. As development proceeds, expression becomes restricted to the pancreas, and by stage 46/47 (the seventh day of development) expression is localized exclusively to the pancreas. Expressed in most adult tissues.

The protein resides in the nucleus. Its subcellular location is the cytoplasm. Functionally, involved in the 3'-end formation of mRNA precursors (pre-mRNA) by the addition of a poly(A) tail of 200-250 nt to the upstream cleavage product. Stimulates poly(A) polymerase (PAPOLA) conferring processivity on the poly(A) tail elongation reaction and also controls the poly(A) tail length. Increases the affinity of poly(A) polymerase for RNA. Binds to poly(A) and to poly(G) with high affinity. May protect the poly(A) tail from degradation. This Xenopus laevis (African clawed frog) protein is Polyadenylate-binding protein 2-A (pabpn1-a).